We begin with the raw amino-acid sequence, 138 residues long: Putative pre-16S rRNA nuclease (138 aa).

This sequence belongs to the YqgF nuclease family.

It localises to the cytoplasm. Functionally, could be a nuclease involved in processing of the 5'-end of pre-16S rRNA. This chain is Putative pre-16S rRNA nuclease, found in Salmonella schwarzengrund (strain CVM19633).